Consider the following 100-residue polypeptide: Large ribosomal subunit protein uL23 (100 aa).

It belongs to the universal ribosomal protein uL23 family. In terms of assembly, part of the 50S ribosomal subunit. Contacts protein L29, and trigger factor when it is bound to the ribosome.

In terms of biological role, one of the early assembly proteins it binds 23S rRNA. One of the proteins that surrounds the polypeptide exit tunnel on the outside of the ribosome. Forms the main docking site for trigger factor binding to the ribosome. The chain is Large ribosomal subunit protein uL23 from Aeromonas hydrophila subsp. hydrophila (strain ATCC 7966 / DSM 30187 / BCRC 13018 / CCUG 14551 / JCM 1027 / KCTC 2358 / NCIMB 9240 / NCTC 8049).